The primary structure comprises 64 residues: Large ribosomal subunit protein uL30 (64 aa).

Belongs to the universal ribosomal protein uL30 family. As to quaternary structure, part of the 50S ribosomal subunit.

This is Large ribosomal subunit protein uL30 from Syntrophus aciditrophicus (strain SB).